We begin with the raw amino-acid sequence, 403 residues long: Phosphoglycerate kinase (403 aa).

Substrate contacts are provided by residues 21 to 23 (DFN), R36, 59 to 62 (HLGR), R119, and R154. Residues K207, G299, E330, and 357–360 (GGDA) each bind ATP.

The protein belongs to the phosphoglycerate kinase family. In terms of assembly, monomer.

It is found in the cytoplasm. It catalyses the reaction (2R)-3-phosphoglycerate + ATP = (2R)-3-phospho-glyceroyl phosphate + ADP. It functions in the pathway carbohydrate degradation; glycolysis; pyruvate from D-glyceraldehyde 3-phosphate: step 2/5. The polypeptide is Phosphoglycerate kinase (Chlamydia trachomatis serovar L2 (strain ATCC VR-902B / DSM 19102 / 434/Bu)).